Reading from the N-terminus, the 360-residue chain is Homeobox protein ceh-60 (360 aa).

The segment at 1–82 is PBC-A; it reads MDNLIKQLQM…ENPTFPLEEV (82 aa). In terms of domain architecture, PBC spans 1–179; that stretch reads MDNLIKQLQM…ILVLRREIEQ (179 aa). Positions 85-179 are PBC-B; the sequence is EKDEEWQPLE…ILVLRREIEQ (95 aa). Positions 180–242 form a DNA-binding region, homeobox; sequence QGRKRRNFDK…NQRIRTKQQA (63 aa).

It belongs to the TALE/PBX homeobox family. As to quaternary structure, forms a heterodimer with homeobox unc-62. Interacts with pqm-1.

Its subcellular location is the nucleus. In terms of biological role, probable transcription regulator which binds to DNA, repressing genes involved in longevity and stress, while activating genes involved in reproduction, such as the vitellogenins. Associates with homeobox unc-62 to regulate gene expression, including repression of genes involved in innate immunity. Required for intestinal expression of vitellogenin genes. Negatively modulates longevity, probably independently of effects on vitellogenesis. Involved in lipid homeostasis, contributing to the reallocation of intestinal lipids to the germline and to the formation of the cuticle. Associates with transcriptional regulator pqm-1 at the daf-16 associated element within the promoters of stress-responsive genes to regulate expression. This chain is Homeobox protein ceh-60, found in Caenorhabditis elegans.